Here is a 249-residue protein sequence, read N- to C-terminus: Uridylate kinase (249 aa).

Residue 16–19 (KLSG) participates in ATP binding. Glycine 57 is a binding site for UMP. Glycine 58 and arginine 62 together coordinate ATP. UMP contacts are provided by residues aspartate 77 and 138 to 145 (AGMPYFST). Asparagine 166, tyrosine 172, and aspartate 175 together coordinate ATP.

The protein belongs to the UMP kinase family. In terms of assembly, homohexamer.

The protein resides in the cytoplasm. The catalysed reaction is UMP + ATP = UDP + ADP. It functions in the pathway pyrimidine metabolism; CTP biosynthesis via de novo pathway; UDP from UMP (UMPK route): step 1/1. Its activity is regulated as follows. Inhibited by UTP. In terms of biological role, catalyzes the reversible phosphorylation of UMP to UDP. This chain is Uridylate kinase, found in Bifidobacterium adolescentis (strain ATCC 15703 / DSM 20083 / NCTC 11814 / E194a).